Consider the following 188-residue polypeptide: UPF0200 protein YG5714_1176 (188 aa).

ATP is bound at residue 15–22; it reads GMPGSGKS.

It belongs to the UPF0200 family.

In Saccharolobus islandicus (strain Y.G.57.14 / Yellowstone #1) (Sulfolobus islandicus), this protein is UPF0200 protein YG5714_1176.